Reading from the N-terminus, the 130-residue chain is C-C motif chemokine 28 (130 aa).

An N-terminal signal peptide occupies residues 1–16 (MQQAGLTLMAVAVCVA). Intrachain disulfides connect cysteine 30–cysteine 58 and cysteine 31–cysteine 73. Residue asparagine 78 is glycosylated (N-linked (GlcNAc...) asparagine). Positions 92–130 (KNGRENVCSGKKQPSRKDRKGHTTRKHRTRGTHRHEASR) are disordered. Residues 104-124 (QPSRKDRKGHTTRKHRTRGTH) show a composition bias toward basic residues.

Belongs to the intercrine beta (chemokine CC) family. As to expression, mainly expressed in testis, epithelial cells of normal colon, kidney, Peyer patches, lymph nodes. Also found in lower levels in brain, spleen and lung.

The protein localises to the secreted. Its function is as follows. Chemotactic for resting CD4, CD8 T-cells and eosinophils. Binds to CCR10 and induces calcium mobilization in a dose-dependent manner. This is C-C motif chemokine 28 (Ccl28) from Mus musculus (Mouse).